Here is a 480-residue protein sequence, read N- to C-terminus: Probable cyclodipeptide synthase PUL1 (480 aa).

The protein operates within siderophore biosynthesis. In terms of biological role, probable cyclodipeptide synthase; part of the PUL gene cluster that mediates the formation of pulcherrimin, a red iron-containing pigment composed of two cyclized and modified leucine molecules that acts as a siderophore, a chelator that binds iron outside the cell for subsequent uptake. Two leucine molecules are cyclized via a cyclodipeptide synthase, and the resulting diketopiperazine is oxidized by a cytochrome P450 monooxygenase to generate pulcherriminic acid (PA), which can then spontaneously bind iron to form pulcherrimin. The probable cyclodipeptide synthase PUL1 and the cytochrome P450 monooxygenase PUL2 encode the enzymes responsible for the two-step pulcherrimin biosynthesis pathway. This Kluyveromyces lactis (strain ATCC 8585 / CBS 2359 / DSM 70799 / NBRC 1267 / NRRL Y-1140 / WM37) (Yeast) protein is Probable cyclodipeptide synthase PUL1.